Here is a 550-residue protein sequence, read N- to C-terminus: Dihydroxy-acid dehydratase (550 aa).

Aspartate 78 contacts Mg(2+). Cysteine 119 contributes to the [2Fe-2S] cluster binding site. Aspartate 120 and lysine 121 together coordinate Mg(2+). Lysine 121 is modified (N6-carboxylysine). Cysteine 191 contacts [2Fe-2S] cluster. Glutamate 440 lines the Mg(2+) pocket. The active-site Proton acceptor is the serine 466.

Belongs to the IlvD/Edd family. In terms of assembly, homodimer. [2Fe-2S] cluster serves as cofactor. Mg(2+) is required as a cofactor.

It catalyses the reaction (2R)-2,3-dihydroxy-3-methylbutanoate = 3-methyl-2-oxobutanoate + H2O. It carries out the reaction (2R,3R)-2,3-dihydroxy-3-methylpentanoate = (S)-3-methyl-2-oxopentanoate + H2O. The protein operates within amino-acid biosynthesis; L-isoleucine biosynthesis; L-isoleucine from 2-oxobutanoate: step 3/4. It participates in amino-acid biosynthesis; L-valine biosynthesis; L-valine from pyruvate: step 3/4. Functionally, functions in the biosynthesis of branched-chain amino acids. Catalyzes the dehydration of (2R,3R)-2,3-dihydroxy-3-methylpentanoate (2,3-dihydroxy-3-methylvalerate) into 2-oxo-3-methylpentanoate (2-oxo-3-methylvalerate) and of (2R)-2,3-dihydroxy-3-methylbutanoate (2,3-dihydroxyisovalerate) into 2-oxo-3-methylbutanoate (2-oxoisovalerate), the penultimate precursor to L-isoleucine and L-valine, respectively. This Methanococcus aeolicus (strain ATCC BAA-1280 / DSM 17508 / OCM 812 / Nankai-3) protein is Dihydroxy-acid dehydratase.